The following is a 283-amino-acid chain: Nucleotide-binding protein DR_1434 (283 aa).

8 to 15 (GLSGSGKS) is an ATP binding site. 57–60 (DTRT) contacts GTP.

The protein belongs to the RapZ-like family.

In terms of biological role, displays ATPase and GTPase activities. This is Nucleotide-binding protein DR_1434 from Deinococcus radiodurans (strain ATCC 13939 / DSM 20539 / JCM 16871 / CCUG 27074 / LMG 4051 / NBRC 15346 / NCIMB 9279 / VKM B-1422 / R1).